Here is a 370-residue protein sequence, read N- to C-terminus: 1-propanol dehydrogenase PduQ (370 aa).

It belongs to the iron-containing alcohol dehydrogenase family. Interacts with PduP, probably via the N-terminus of PduQ. It depends on Fe cation as a cofactor.

It is found in the bacterial microcompartment. It catalyses the reaction 1-propanol + NAD(+) = propanal + NADH + H(+). It participates in polyol metabolism; 1,2-propanediol degradation. In terms of biological role, an iron-dependent alcohol dehydrogenase required for optimal 1,2-propanediol (1,2-PD) degradation. NAD(+) and NADH are regenerated internally within the bacterial microcompartment (BMC) dedicated to 1,2-PD degradation by the PduP and PduQ enzymes, which reduce NAD(+) and oxidize NADH respectively, although there must also be cofactor transport across the BMC. Its function is as follows. Expression of a cosmid containing the full 21-gene pdu operon in E.coli allows E.coli to grow on 1,2-propanediol (1,2-PD) with the appearance of bacterial microcompartments (BMC) in its cytoplasm. The 1,2-PD-specific bacterial microcompartment (BMC) concentrates low levels of 1,2-PD catabolic enzymes, concentrates volatile reaction intermediates thus enhancing pathway flux and keeps the level of toxic, mutagenic propionaldehyde low. The chain is 1-propanol dehydrogenase PduQ from Citrobacter freundii.